We begin with the raw amino-acid sequence, 158 residues long: 6,7-dimethyl-8-ribityllumazine synthase (158 aa).

5-amino-6-(D-ribitylamino)uracil-binding positions include Phe22, Ala57–Glu59, and Ala81–Ile83. Position 86–87 (Gly86–Thr87) interacts with (2S)-2-hydroxy-3-oxobutyl phosphate. The active-site Proton donor is His89. Phe114 contributes to the 5-amino-6-(D-ribitylamino)uracil binding site. Residue Arg128 coordinates (2S)-2-hydroxy-3-oxobutyl phosphate.

This sequence belongs to the DMRL synthase family. In terms of assembly, forms an icosahedral capsid composed of 60 subunits, arranged as a dodecamer of pentamers.

It carries out the reaction (2S)-2-hydroxy-3-oxobutyl phosphate + 5-amino-6-(D-ribitylamino)uracil = 6,7-dimethyl-8-(1-D-ribityl)lumazine + phosphate + 2 H2O + H(+). It participates in cofactor biosynthesis; riboflavin biosynthesis; riboflavin from 2-hydroxy-3-oxobutyl phosphate and 5-amino-6-(D-ribitylamino)uracil: step 1/2. Its function is as follows. Catalyzes the formation of 6,7-dimethyl-8-ribityllumazine by condensation of 5-amino-6-(D-ribitylamino)uracil with 3,4-dihydroxy-2-butanone 4-phosphate. This is the penultimate step in the biosynthesis of riboflavin. This chain is 6,7-dimethyl-8-ribityllumazine synthase, found in Shewanella pealeana (strain ATCC 700345 / ANG-SQ1).